We begin with the raw amino-acid sequence, 461 residues long: MLQACRVLRSRAGPSPGSWQPLSFDGGAFHLKSIGELTRALLVLRLCAWPPLVTHGLALQAWSQRLLGSRLSGALLRASIYGQFVAGETAEEVRSCVLQLQNLGLRPLLAVPTEEEPDSAVKTGEAWYEGNLSAMLRCVDLSRGLLETPDPTGNALMQLKMTALMSTRLCKQLTSWVRRPGDSLELSPERLAEAMDSGQDLQVSCLNTEQTRHLQASLSRLHRVVQHARAQRVRLLVDAEYTSLNPALSLLVAALATRWNSSGEGGPWVWNTYQAYLKDTYERLRWDAEAADRAGLAFGVKLVRGAYLDKERETARLQGTEDPTQPDYEATSQSYSRCLELMLTQVSHRGPMCHLMVASHNEDSVRQATKRMWELGIPPDGPVCFGQLLGMCDHVSLALGQAGYAVYKSIPYGSLEEVIPYLIRRAQENRSVLRGARREQELLSQELRRRLLGRGLRVSPH.

An N6-acetyllysine modification is found at K310.

The protein belongs to the proline oxidase family. It depends on FAD as a cofactor.

It carries out the reaction trans-4-hydroxy-L-proline + a quinone = (3R,5S)-1-pyrroline-3-hydroxy-5-carboxylate + a quinol + H(+). The catalysed reaction is L-proline + a quinone = (S)-1-pyrroline-5-carboxylate + a quinol + H(+). Its pathway is amino-acid degradation; L-proline degradation into L-glutamate; L-glutamate from L-proline: step 1/2. In terms of biological role, dehydrogenase that converts trans-4-L-hydroxyproline to delta-1-pyrroline-3-hydroxy-5-carboxylate (Hyp) using ubiquinone-10 as the terminal electron acceptor. Can also use proline as a substrate but with a very much lower efficiency. Does not react with other diastereomers of Hyp: trans-4-D-hydroxyproline and cis-4-L-hydroxyproline. Ubiquininone analogs such as menadione, duroquinone and ubiquinone-1 react more efficiently than oxygen as the terminal electron acceptor during catalysis. This Bos taurus (Bovine) protein is Hydroxyproline dehydrogenase.